Reading from the N-terminus, the 92-residue chain is Small ribosomal subunit protein uS19 (92 aa).

This sequence belongs to the universal ribosomal protein uS19 family.

Its function is as follows. Protein S19 forms a complex with S13 that binds strongly to the 16S ribosomal RNA. The sequence is that of Small ribosomal subunit protein uS19 from Agrobacterium fabrum (strain C58 / ATCC 33970) (Agrobacterium tumefaciens (strain C58)).